The sequence spans 1287 residues: DNA-directed RNA polymerase 147 kDa polypeptide (1287 aa).

Belongs to the poxviridae DNA-directed RNA polymerase 147 kDa subunit family. As to quaternary structure, the DNA-dependent RNA polymerase used for intermediate and late genes expression consists of eight subunits Rpo30/OPG66, Rpo7/OPG90, Rpo22/OPG103, Rpo147/OPG105, Rpo18/OPG119, Rpo19/OPG131, Rpo132/OPG151 and Rpo35/OPG156. The same holoenzyme, with the addition of the transcription-specificity factor OPG109, is used for early gene expression.

Its subcellular location is the virion. The enzyme catalyses RNA(n) + a ribonucleoside 5'-triphosphate = RNA(n+1) + diphosphate. Its function is as follows. Part of the DNA-dependent RNA polymerase which catalyzes the transcription of viral DNA into RNA using the four ribonucleoside triphosphates as substrates. Responsible for the transcription of early, intermediate and late genes. DNA-dependent RNA polymerase associates with the early transcription factor (ETF), itself composed of OPG118 and OPG133, thereby allowing the early genes transcription. Late transcription, and probably also intermediate transcription, require newly synthesized RNA polymerase. In Fowlpox virus (strain NVSL) (FPV), this protein is DNA-directed RNA polymerase 147 kDa polypeptide (OPG105).